We begin with the raw amino-acid sequence, 138 residues long: Cysteine desulfuration protein SufE (138 aa).

Residue Cys51 is the Cysteine persulfide intermediate of the active site.

Belongs to the SufE family. Homodimer. Interacts with SufS.

The protein resides in the cytoplasm. Its pathway is cofactor biosynthesis; iron-sulfur cluster biosynthesis. Its function is as follows. Participates in cysteine desulfuration mediated by SufS. Cysteine desulfuration mobilizes sulfur from L-cysteine to yield L-alanine and constitutes an essential step in sulfur metabolism for biosynthesis of a variety of sulfur-containing biomolecules. Functions as a sulfur acceptor for SufS, by mediating the direct transfer of the sulfur atom from the S-sulfanylcysteine of SufS, an intermediate product of cysteine desulfuration process. This Sodalis glossinidius (strain morsitans) protein is Cysteine desulfuration protein SufE.